The following is a 77-amino-acid chain: MSSIEKRVKEIVAEQLGVDEAQVTNDASFMDDLGADSLDTVELVMALEEEFDIEISDEDAEKIQNVQDAIDYITEHT.

Residues Ser2 to Thr77 enclose the Carrier domain. Ser37 is modified (O-(pantetheine 4'-phosphoryl)serine).

Belongs to the acyl carrier protein (ACP) family. 4'-phosphopantetheine is transferred from CoA to a specific serine of apo-ACP by AcpS. This modification is essential for activity because fatty acids are bound in thioester linkage to the sulfhydryl of the prosthetic group.

Its subcellular location is the cytoplasm. The protein operates within lipid metabolism; fatty acid biosynthesis. In terms of biological role, carrier of the growing fatty acid chain in fatty acid biosynthesis. The polypeptide is Acyl carrier protein (Geobacter sulfurreducens (strain ATCC 51573 / DSM 12127 / PCA)).